The primary structure comprises 248 residues: Probable transcriptional regulatory protein Msil_2305 (248 aa).

This sequence belongs to the TACO1 family.

Its subcellular location is the cytoplasm. This is Probable transcriptional regulatory protein Msil_2305 from Methylocella silvestris (strain DSM 15510 / CIP 108128 / LMG 27833 / NCIMB 13906 / BL2).